A 361-amino-acid polypeptide reads, in one-letter code: tRNA-specific 2-thiouridylase MnmA (361 aa).

ATP-binding positions include 6–13 (AMSGGVDS) and Leu-32. The Nucleophile role is filled by Cys-101. Cys-101 and Cys-194 are joined by a disulfide. Gly-125 contributes to the ATP binding site. Residues 144–146 (KDQ) are interaction with tRNA. Cys-194 (cysteine persulfide intermediate) is an active-site residue.

Belongs to the MnmA/TRMU family.

The protein resides in the cytoplasm. It catalyses the reaction S-sulfanyl-L-cysteinyl-[protein] + uridine(34) in tRNA + AH2 + ATP = 2-thiouridine(34) in tRNA + L-cysteinyl-[protein] + A + AMP + diphosphate + H(+). Its function is as follows. Catalyzes the 2-thiolation of uridine at the wobble position (U34) of tRNA, leading to the formation of s(2)U34. This is tRNA-specific 2-thiouridylase MnmA from Corynebacterium aurimucosum (strain ATCC 700975 / DSM 44827 / CIP 107346 / CN-1) (Corynebacterium nigricans).